A 60-amino-acid chain; its full sequence is Large ribosomal subunit protein bL32 (60 aa).

It belongs to the bacterial ribosomal protein bL32 family.

This Pseudothermotoga lettingae (strain ATCC BAA-301 / DSM 14385 / NBRC 107922 / TMO) (Thermotoga lettingae) protein is Large ribosomal subunit protein bL32.